Reading from the N-terminus, the 243-residue chain is Cytochrome c oxidase subunit 2 (243 aa).

At 1-34 the chain is on the mitochondrial intermembrane side; it reads MNNIIHNDAPTPWGIYFQDGASPVYDGIVELHDQ. The helical transmembrane segment at 35-55 threads the bilayer; it reads VLFYLLIVLVGVSWILFSTIL. The Mitochondrial matrix segment spans residues 56 to 74; sequence RFRGSGIVHKYHNHSTTIE. The helical transmembrane segment at 75–97 threads the bilayer; it reads FVWTVSPALLLIAIAFPSFKLLY. Residues 98 to 243 lie on the Mitochondrial intermembrane side of the membrane; sequence LMDEVIDPSI…EKFLSWLDNQ (146 aa). Residues His-178, Cys-213, Glu-215, Cys-217, His-221, and Met-224 each coordinate Cu cation. Glu-215 contributes to the Mg(2+) binding site.

This sequence belongs to the cytochrome c oxidase subunit 2 family. In terms of assembly, component of the cytochrome c oxidase (complex IV, CIV), a multisubunit enzyme composed of a catalytic core of 3 subunits and several supernumerary subunits. The complex exists as a monomer or a dimer and forms supercomplexes (SCs) in the inner mitochondrial membrane with ubiquinol-cytochrome c oxidoreductase (cytochrome b-c1 complex, complex III, CIII). Cu cation is required as a cofactor.

It is found in the mitochondrion inner membrane. The catalysed reaction is 4 Fe(II)-[cytochrome c] + O2 + 8 H(+)(in) = 4 Fe(III)-[cytochrome c] + 2 H2O + 4 H(+)(out). Component of the cytochrome c oxidase, the last enzyme in the mitochondrial electron transport chain which drives oxidative phosphorylation. The respiratory chain contains 3 multisubunit complexes succinate dehydrogenase (complex II, CII), ubiquinol-cytochrome c oxidoreductase (cytochrome b-c1 complex, complex III, CIII) and cytochrome c oxidase (complex IV, CIV), that cooperate to transfer electrons derived from NADH and succinate to molecular oxygen, creating an electrochemical gradient over the inner membrane that drives transmembrane transport and the ATP synthase. Cytochrome c oxidase is the component of the respiratory chain that catalyzes the reduction of oxygen to water. Electrons originating from reduced cytochrome c in the intermembrane space (IMS) are transferred via the dinuclear copper A center (CU(A)) of subunit 2 and heme A of subunit 1 to the active site in subunit 1, a binuclear center (BNC) formed by heme A3 and copper B (CU(B)). The BNC reduces molecular oxygen to 2 water molecules using 4 electrons from cytochrome c in the IMS and 4 protons from the mitochondrial matrix. This is Cytochrome c oxidase subunit 2 from Pneumocystis carinii.